The following is a 387-amino-acid chain: MGASWHQTIRALGSAHHVEVDGSQRHRMCQNEFVEVLNRGKPSVEQIIRIGMDTSKSVFQLHGVNAVEQPILRKKLSRREMVKFFEKTPPTIIALEACGGSHHWARLLSSFGHEVKLIAPQLAKPYVKRGKNDAADAEALCEAMSRPTMRFVPMKTADQQAALMLVGMRERLIRNRTQLANAIRGFAMEFGIVAAKGMCRIEALLERIAADPSLPELAQDLFALHGQEYRELACQIKTLDEKLMKLHRADECSKRLAEIPGVGPIGASLLLMKTPDPRMFKSGRDFAAWIGLTPKDHSTAGKVRLGVITRAGDEMLRSILVVGATSLLQQVRTGRSRHASAWLMGLLQRKRPKLVAVALANKLARIAWKLMTSGESYRQAEGQAQTS.

This sequence belongs to the transposase 20 family.

The protein is Putative transposase y4pF/y4sB of Sinorhizobium fredii (strain NBRC 101917 / NGR234).